The following is a 486-amino-acid chain: CUGBP Elav-like family member 1 (486 aa).

M1 is modified (N-acetylmethionine). At T4 the chain carries Phosphothreonine. RRM domains follow at residues 16-99 (IKMF…PADS) and 108-188 (RKLF…FADT). K109 participates in a covalent cross-link: Glycyl lysine isopeptide (Lys-Gly) (interchain with G-Cter in SUMO2). S179 and S302 each carry phosphoserine. Residues 277 to 309 (TPSGTNALTTSSSPLSVLTSSGSSPSSSSSNSV) form a disordered region. The segment covering 284–309 (LTTSSSPLSVLTSSGSSPSSSSSNSV) has biased composition (low complexity). Residues 401–479 (ANLFIYHLPQ…KRLKVQLKRS (79 aa)) enclose the RRM 3 domain.

Belongs to the CELF/BRUNOL family. As to quaternary structure, component of an EIF2 complex at least composed of CELF1/CUGBP1, CALR, CALR3, EIF2S1, EIF2S2, HSP90B1 and HSPA5. Associates with polysomes. Interacts with HNRNPH1; the interaction in RNA-dependent. Interacts with PARN. Post-translationally, phosphorylated. Its phosphorylation status increases in senescent cells. In terms of tissue distribution, ubiquitous.

It localises to the nucleus. The protein resides in the cytoplasm. RNA-binding protein implicated in the regulation of several post-transcriptional events. Involved in pre-mRNA alternative splicing, mRNA translation and stability. Mediates exon inclusion and/or exclusion in pre-mRNA that are subject to tissue-specific and developmentally regulated alternative splicing. Specifically activates exon 5 inclusion of cardiac isoforms of TNNT2 during heart remodeling at the juvenile to adult transition. Acts both as an activator and as a repressor of a pair of coregulated exons: promotes inclusion of the smooth muscle (SM) exon but exclusion of the non-muscle (NM) exon in actinin pre-mRNAs. Activates SM exon 5 inclusion by antagonizing the repressive effect of PTB. Promotes exclusion of exon 11 of the INSR pre-mRNA. Inhibits, together with HNRNPH1, insulin receptor (IR) pre-mRNA exon 11 inclusion in myoblast. Increases translation and controls the choice of translation initiation codon of CEBPB mRNA. Increases mRNA translation of CEBPB in aging liver. Increases translation of CDKN1A mRNA by antagonizing the repressive effect of CALR3. Mediates rapid cytoplasmic mRNA deadenylation. Recruits the deadenylase PARN to the poly(A) tail of EDEN-containing mRNAs to promote their deadenylation. Required for completion of spermatogenesis. Binds to (CUG)n triplet repeats in the 3'-UTR of transcripts such as DMPK and to Bruno response elements (BREs). Binds to muscle-specific splicing enhancer (MSE) intronic sites flanking the alternative exon 5 of TNNT2 pre-mRNA. Binds to AU-rich sequences (AREs or EDEN-like) localized in the 3'-UTR of JUN and FOS mRNAs. Binds to the IR RNA. Binds to the 5'-region of CDKN1A and CEBPB mRNAs. Binds with the 5'-region of CEBPB mRNA in aging liver. May be a specific regulator of miRNA biogenesis. Binds to primary microRNA pri-MIR140 and, with CELF2, negatively regulates the processing to mature miRNA. This chain is CUGBP Elav-like family member 1 (CELF1), found in Homo sapiens (Human).